The primary structure comprises 365 residues: Phospho-N-acetylmuramoyl-pentapeptide-transferase (365 aa).

10 consecutive transmembrane segments (helical) span residues 29-49 (VGGLFFSLFISIVIGNRIIVW), 73-93 (GTPTMGGIIILISVVTSVIIW), 97-117 (SNIYIWYILFIFVMYGILGLV), 133-153 (ILNKYLWQSIIAWILIVIMFI), 171-191 (IVCKLKIWDMILAYFVIVGTS), 202-222 (GLVIVPVILVVSGLAIVTWVV), 242-262 (LVVVCASIIGAGLGFLWFNSY), 266-286 (IFMGDVGSLSLGGVIGLVSIL), 291-311 (YLLLIMGGIFVIESLSVIFQV), and 341-361 (IVVRFWIVSSILVLLSIVIFI).

This sequence belongs to the glycosyltransferase 4 family. MraY subfamily. Mg(2+) is required as a cofactor.

It localises to the cell inner membrane. The enzyme catalyses UDP-N-acetyl-alpha-D-muramoyl-L-alanyl-gamma-D-glutamyl-meso-2,6-diaminopimeloyl-D-alanyl-D-alanine + di-trans,octa-cis-undecaprenyl phosphate = di-trans,octa-cis-undecaprenyl diphospho-N-acetyl-alpha-D-muramoyl-L-alanyl-D-glutamyl-meso-2,6-diaminopimeloyl-D-alanyl-D-alanine + UMP. It participates in cell wall biogenesis; peptidoglycan biosynthesis. Functionally, catalyzes the initial step of the lipid cycle reactions in the biosynthesis of the cell wall peptidoglycan: transfers peptidoglycan precursor phospho-MurNAc-pentapeptide from UDP-MurNAc-pentapeptide onto the lipid carrier undecaprenyl phosphate, yielding undecaprenyl-pyrophosphoryl-MurNAc-pentapeptide, known as lipid I. The sequence is that of Phospho-N-acetylmuramoyl-pentapeptide-transferase from Blochmanniella floridana.